We begin with the raw amino-acid sequence, 94 residues long: DNA-directed RNA polymerase subunit Rpo11 (94 aa).

It belongs to the archaeal Rpo11/eukaryotic RPB11/RPC19 RNA polymerase subunit family. Part of the RNA polymerase complex.

It localises to the cytoplasm. The catalysed reaction is RNA(n) + a ribonucleoside 5'-triphosphate = RNA(n+1) + diphosphate. DNA-dependent RNA polymerase (RNAP) catalyzes the transcription of DNA into RNA using the four ribonucleoside triphosphates as substrates. This is DNA-directed RNA polymerase subunit Rpo11 from Natronomonas pharaonis (strain ATCC 35678 / DSM 2160 / CIP 103997 / JCM 8858 / NBRC 14720 / NCIMB 2260 / Gabara) (Halobacterium pharaonis).